A 210-amino-acid polypeptide reads, in one-letter code: MKNKLDLSLYLVATKGNKSEECFLNTLENAIKGGVSIIQLREKELNAREFYKLGLKVQKLCKSYKIPFLINDRVDIALALDADGVHLGQEDLEAKLARKLLGDEKIIGLSLKKLEQLEFIQGVNYLGCGAIKATPTKESSLLSLELLSQICDKSPIGVVAIGGIDKEALVELKGINLSGVAVVRAIMDAKDAFLAAKELKRKIYENLSLK.

Residues 39–43 (QLREK) and N71 each bind 4-amino-2-methyl-5-(diphosphooxymethyl)pyrimidine. The Mg(2+) site is built by D72 and D91. Residue S110 coordinates 4-amino-2-methyl-5-(diphosphooxymethyl)pyrimidine. 134–136 (TPT) contributes to the 2-[(2R,5Z)-2-carboxy-4-methylthiazol-5(2H)-ylidene]ethyl phosphate binding site. K137 is a binding site for 4-amino-2-methyl-5-(diphosphooxymethyl)pyrimidine. G163 lines the 2-[(2R,5Z)-2-carboxy-4-methylthiazol-5(2H)-ylidene]ethyl phosphate pocket.

It belongs to the thiamine-phosphate synthase family. The cofactor is Mg(2+).

It carries out the reaction 2-[(2R,5Z)-2-carboxy-4-methylthiazol-5(2H)-ylidene]ethyl phosphate + 4-amino-2-methyl-5-(diphosphooxymethyl)pyrimidine + 2 H(+) = thiamine phosphate + CO2 + diphosphate. The catalysed reaction is 2-(2-carboxy-4-methylthiazol-5-yl)ethyl phosphate + 4-amino-2-methyl-5-(diphosphooxymethyl)pyrimidine + 2 H(+) = thiamine phosphate + CO2 + diphosphate. The enzyme catalyses 4-methyl-5-(2-phosphooxyethyl)-thiazole + 4-amino-2-methyl-5-(diphosphooxymethyl)pyrimidine + H(+) = thiamine phosphate + diphosphate. The protein operates within cofactor biosynthesis; thiamine diphosphate biosynthesis; thiamine phosphate from 4-amino-2-methyl-5-diphosphomethylpyrimidine and 4-methyl-5-(2-phosphoethyl)-thiazole: step 1/1. Its function is as follows. Condenses 4-methyl-5-(beta-hydroxyethyl)thiazole monophosphate (THZ-P) and 2-methyl-4-amino-5-hydroxymethyl pyrimidine pyrophosphate (HMP-PP) to form thiamine monophosphate (TMP). In Campylobacter jejuni (strain RM1221), this protein is Thiamine-phosphate synthase.